Here is a 186-residue protein sequence, read N- to C-terminus: Ribosome-recycling factor (186 aa).

It belongs to the RRF family.

The protein resides in the cytoplasm. Its function is as follows. Responsible for the release of ribosomes from messenger RNA at the termination of protein biosynthesis. May increase the efficiency of translation by recycling ribosomes from one round of translation to another. This Burkholderia ambifaria (strain ATCC BAA-244 / DSM 16087 / CCUG 44356 / LMG 19182 / AMMD) (Burkholderia cepacia (strain AMMD)) protein is Ribosome-recycling factor.